The chain runs to 83 residues: Bublin coiled-coil protein (83 aa).

The disordered stretch occupies residues 1-25; the sequence is MSGPNGDLGMPVDAGTEGENDSFGE. The stretch at 25 to 74 forms a coiled coil; that stretch reads EAEYAAINSMLDQINSCLDHLEEKNDHLHARLQELLESNRQTRLEFQQQL. Ser-82 is modified (phosphoserine).

This sequence belongs to the UPF0184 (EST00098) family.

It is found in the cell junction. The protein resides in the cytoplasm. It localises to the cytoskeleton. Functionally, essential for intermediate filament organization in intestinal cells, interacts with intermediate filament and regulates intestinal lumen morphology. This Mus musculus (Mouse) protein is Bublin coiled-coil protein.